Here is a 197-residue protein sequence, read N- to C-terminus: Recombination protein RecR (197 aa).

The C4-type zinc-finger motif lies at 57-72 (CSVCFGITEDDPCHLC). The 96-residue stretch at 79–174 (TTICVVEEPQ…RVTRLAHGIP (96 aa)) folds into the Toprim domain.

It belongs to the RecR family.

Its function is as follows. May play a role in DNA repair. It seems to be involved in an RecBC-independent recombinational process of DNA repair. It may act with RecF and RecO. In Geotalea daltonii (strain DSM 22248 / JCM 15807 / FRC-32) (Geobacter daltonii), this protein is Recombination protein RecR.